Here is an 85-residue protein sequence, read N- to C-terminus: uncharacterized protein (85 aa).

A signal peptide spans 1 to 19 (MKTIFTVGAVVLATCLLSG). The N-palmitoyl cysteine moiety is linked to residue Cys20. Cys20 carries the S-diacylglycerol cysteine lipid modification.

Its subcellular location is the cell outer membrane. This is an uncharacterized protein from Escherichia coli (strain K12).